The following is a 522-amino-acid chain: Endochitinase 11 (522 aa).

An N-terminal signal peptide occupies residues 1-24 (MLFSMVMFTERWWVGSKDCPRVPA). 2 N-linked (GlcNAc...) asparagine glycosylation sites follow: Asn-148 and Asn-275. A GH18 domain is found at 235–522 (KHVYAPYVDF…ALTCLRNSTA (288 aa)). Catalysis depends on Glu-346, which acts as the Proton donor. N-linked (GlcNAc...) asparagine glycans are attached at residues Asn-455 and Asn-519.

It belongs to the glycosyl hydrolase 18 family. Chitinase class V subfamily.

Its subcellular location is the secreted. The enzyme catalyses Random endo-hydrolysis of N-acetyl-beta-D-glucosaminide (1-&gt;4)-beta-linkages in chitin and chitodextrins.. In terms of biological role, secreted chitinase involved in the degradation of chitin, a component of the cell walls of fungi and exoskeletal elements of some animals (including worms and arthropods). Participates in the infection process and directly acts in the penetration process of the host cuticle. This is Endochitinase 11 (chi11) from Metarhizium anisopliae (Entomophthora anisopliae).